The sequence spans 134 residues: Ribonuclease VapC40 (134 aa).

In terms of domain architecture, PINc spans 3–126 (APDTSVLVAG…LRAVETYERL (124 aa)). Aspartate 5 and aspartate 98 together coordinate Mg(2+).

Belongs to the PINc/VapC protein family. It depends on Mg(2+) as a cofactor.

Toxic component of a type II toxin-antitoxin (TA) system. An RNase. Its cognate antitoxin is VapB40. This chain is Ribonuclease VapC40, found in Mycobacterium tuberculosis (strain CDC 1551 / Oshkosh).